The chain runs to 1175 residues: MRNLISLIAWHDSGWNGRVCRNPKENKYCESFGYVIRKRKYEFCVNNPDANLGNSRERACSEAIVFCKGKVQEHNIRFPAIFYVDRKNRNEHEIKMIKKEIEEQLRMINGKYAILYVRENPLSENRVIVGCVKIKEIIDGSKDYIRKKQSPNRVGRGIVFDVENDVIFALPYQELLEYCKNKNKEIEEILKEFNLIFEVGDFERYFKGMSNFISDEVAVQILKKGLEIVEEFNKFREENQDFDKYLTDENIAFRPHVMKKFDEFAENIKKVIAELEGSKYKYPGLPGVLYFLGMEDAYSRYIELWKNEGEKGEEKLYNALIESLENRKENLEFGITKKVIDKFIAQKEEFREFLKNYAVYYELSAFKLEKIKEQYEKEFINLDNIIKNPYILVEDLKENDSFERIIFEELDSWERRRLGDKFNPYSPYRVRALLVEILKRHLSSGNTTISTKDLKDFFEKMDKDIVKITFDEFLRIIEEYKDIISEKVEIVKKEVKNNENKEIIELFTLKEIREYEEIIENTINYLLKSKAPNIDLNPLEIREKLRIKNENKKPAGVDNEEYEKALDMQTEAVVNLLKNRVGILTGPAGTGKTTVIKTIMELMKEVLGLNKIYILTPTGKSAMVVNEKLNNLATAKTIHRYIAEEFKDYFEGDNYFILRLDKITGNDKKEIDALIIDESSMVDIETMGRLLGTIKLDNLKYLIFVGDINQLPPVGAGKPFYDIYNYLEKVNPQSICKLEIVLRADSKKIVELSKLFLDIDKEERIKILNEMFKNKETLGDNEIYRIKENIGGIEKEIITIEVVKDGNIKKSLENAIETILKENNTEDFFDFAVFNDKLQILVPTKTKGEFGSYMINLFIKQESKFIPDKYKNKMLENWFFGDGKVADKVIQIRNNYKKWVYDTERRKWVKEHGVFNGMMGFAYTFKKWNKYQKKYENKTIIRFYYPKIEAYTDEKEMEHAYAITIHKSQGSGFENVILIIPKGLNKFVSKEMLYTAITRAKKRLYVIVEEELKNFLETNISDLARRKTNLLENFNISYLVPYIENRQIITINGEKVRSWQECVLANLFHEVGIEYIYELLSEYLKIGVLPDFKLNIKNRTILWEHYGMLENEKYRKRQKEEKEPIYKQNGFEIIKLSEINENTKLGDKVLIISTSEDLKNNSQVLEKLKTLQQIS.

G586–T593 is a binding site for ATP.

This is an uncharacterized protein from Methanocaldococcus jannaschii (strain ATCC 43067 / DSM 2661 / JAL-1 / JCM 10045 / NBRC 100440) (Methanococcus jannaschii).